A 44-amino-acid chain; its full sequence is Cytochrome b559 subunit beta (44 aa).

A helical membrane pass occupies residues 17 to 41 (VRWLAVHTLAVPSVFFVGAIAAMQF). Heme contacts are provided by R18 and H23.

The protein belongs to the PsbE/PsbF family. In terms of assembly, heterodimer of an alpha subunit and a beta subunit. PSII is composed of 1 copy each of membrane proteins PsbA, PsbB, PsbC, PsbD, PsbE, PsbF, PsbH, PsbI, PsbJ, PsbK, PsbL, PsbM, PsbT, PsbX, PsbY, PsbZ, Psb30/Ycf12, peripheral proteins PsbO, CyanoQ (PsbQ), PsbU, PsbV and a large number of cofactors. It forms dimeric complexes. Heme b serves as cofactor.

It localises to the cellular thylakoid membrane. This b-type cytochrome is tightly associated with the reaction center of photosystem II (PSII). PSII is a light-driven water:plastoquinone oxidoreductase that uses light energy to abstract electrons from H(2)O, generating O(2) and a proton gradient subsequently used for ATP formation. It consists of a core antenna complex that captures photons, and an electron transfer chain that converts photonic excitation into a charge separation. This Synechocystis sp. (strain ATCC 27184 / PCC 6803 / Kazusa) protein is Cytochrome b559 subunit beta.